The chain runs to 64 residues: Chromatin protein Cren7 (64 aa).

It belongs to the Cren7 family. In terms of assembly, monomer. In terms of processing, methylated at multiple sites, to varying extents.

The protein resides in the chromosome. It is found in the cytoplasm. A chromatin protein, binds double-stranded DNA without sequence specificity. Constrains negative DNA supercoils. This Aeropyrum pernix (strain ATCC 700893 / DSM 11879 / JCM 9820 / NBRC 100138 / K1) protein is Chromatin protein Cren7.